We begin with the raw amino-acid sequence, 82 residues long: MKKGIHPTYREVVFLDTSSNFKFLTRSTLNSRETIKWEDGQEYPLIKVELSSASHPFYTGKKIFVDTAGRVEKFQQKYKKRS.

This sequence belongs to the bacterial ribosomal protein bL31 family. Type B subfamily. As to quaternary structure, part of the 50S ribosomal subunit.

The protein is Large ribosomal subunit protein bL31B of Amoebophilus asiaticus (strain 5a2).